The sequence spans 154 residues: Large ribosomal subunit protein uL13 (154 aa).

It belongs to the universal ribosomal protein uL13 family. Part of the 50S ribosomal subunit.

In terms of biological role, this protein is one of the early assembly proteins of the 50S ribosomal subunit, although it is not seen to bind rRNA by itself. It is important during the early stages of 50S assembly. The polypeptide is Large ribosomal subunit protein uL13 (Brucella melitensis biotype 2 (strain ATCC 23457)).